The following is a 201-amino-acid chain: Probable cytokinin riboside 5'-monophosphate phosphoribohydrolase LOG6 (201 aa).

Residues glutamate 89, 107–108 (RK), 124–130 (GYGTLEE), and threonine 136 contribute to the substrate site.

This sequence belongs to the LOG family.

It catalyses the reaction N(6)-(dimethylallyl)adenosine 5'-phosphate + H2O = N(6)-dimethylallyladenine + D-ribose 5-phosphate. It carries out the reaction 9-ribosyl-trans-zeatin 5'-phosphate + H2O = trans-zeatin + D-ribose 5-phosphate. Functionally, cytokinin-activating enzyme working in the direct activation pathway. Phosphoribohydrolase that converts inactive cytokinin nucleotides to the biologically active free-base forms. The polypeptide is Probable cytokinin riboside 5'-monophosphate phosphoribohydrolase LOG6 (LOG6) (Arabidopsis thaliana (Mouse-ear cress)).